Consider the following 134-residue polypeptide: Phosphoribosyl-AMP cyclohydrolase (134 aa).

D80 serves as a coordination point for Mg(2+). Residue C81 participates in Zn(2+) binding. Mg(2+) is bound by residues D82 and D84. Positions 98 and 105 each coordinate Zn(2+).

Belongs to the PRA-CH family. Homodimer. The cofactor is Mg(2+). It depends on Zn(2+) as a cofactor.

Its subcellular location is the cytoplasm. The catalysed reaction is 1-(5-phospho-beta-D-ribosyl)-5'-AMP + H2O = 1-(5-phospho-beta-D-ribosyl)-5-[(5-phospho-beta-D-ribosylamino)methylideneamino]imidazole-4-carboxamide. The protein operates within amino-acid biosynthesis; L-histidine biosynthesis; L-histidine from 5-phospho-alpha-D-ribose 1-diphosphate: step 3/9. Catalyzes the hydrolysis of the adenine ring of phosphoribosyl-AMP. The chain is Phosphoribosyl-AMP cyclohydrolase from Bordetella petrii (strain ATCC BAA-461 / DSM 12804 / CCUG 43448).